The chain runs to 159 residues: 2-C-methyl-D-erythritol 2,4-cyclodiphosphate synthase (159 aa).

Residues Asp-10 and His-12 each coordinate a divalent metal cation. Residues 10–12 and 36–37 each bind 4-CDP-2-C-methyl-D-erythritol 2-phosphate; these read DVH and HS. His-44 lines the a divalent metal cation pocket. Residues 58 to 60, 134 to 137, Phe-141, and Arg-144 contribute to the 4-CDP-2-C-methyl-D-erythritol 2-phosphate site; these read DIG and TTSE.

The protein belongs to the IspF family. Homotrimer. It depends on a divalent metal cation as a cofactor.

The enzyme catalyses 4-CDP-2-C-methyl-D-erythritol 2-phosphate = 2-C-methyl-D-erythritol 2,4-cyclic diphosphate + CMP. The protein operates within isoprenoid biosynthesis; isopentenyl diphosphate biosynthesis via DXP pathway; isopentenyl diphosphate from 1-deoxy-D-xylulose 5-phosphate: step 4/6. In terms of biological role, involved in the biosynthesis of isopentenyl diphosphate (IPP) and dimethylallyl diphosphate (DMAPP), two major building blocks of isoprenoid compounds. Catalyzes the conversion of 4-diphosphocytidyl-2-C-methyl-D-erythritol 2-phosphate (CDP-ME2P) to 2-C-methyl-D-erythritol 2,4-cyclodiphosphate (ME-CPP) with a corresponding release of cytidine 5-monophosphate (CMP). This Roseobacter denitrificans (strain ATCC 33942 / OCh 114) (Erythrobacter sp. (strain OCh 114)) protein is 2-C-methyl-D-erythritol 2,4-cyclodiphosphate synthase.